Here is a 62-residue protein sequence, read N- to C-terminus: Calmodulin regulator protein PCP4 (62 aa).

The tract at residues 1-39 (MSERQSAGATNGKDKTSGDNDGQKKVQEEFDIDMDAPET) is disordered. The segment covering 12–28 (GKDKTSGDNDGQKKVQE) has biased composition (basic and acidic residues). An acidic; binds calcium and is required for modulating the calcium-binding kinetics of calmodulin region spans residues 28-40 (EEFDIDMDAPETE). Residues 39–62 (TERAAVAIQSQFRKFQKKKAGSQS) form the IQ domain.

The protein belongs to the PCP4 family. In terms of assembly, binds to both calcium-free and calcium-bound calmodulin. The affinity for the calcium-bound form is 50-fold greater.

Functions as a modulator of calcium-binding by calmodulin. Thereby, regulates calmodulin activity and the different processes it controls. For instance, may play a role in neuronal differentiation through activation of calmodulin-dependent kinase signaling pathways. This is Calmodulin regulator protein PCP4 from Mus musculus (Mouse).